The chain runs to 76 residues: Kappa-actitoxin-Avd4e (76 aa).

A signal peptide spans 1 to 19 (MNKALFLCLVVLCAAVVFA). Residues 20–31 (AEDLQKAKHAPF) constitute a propeptide that is removed on maturation. 3 cysteine pairs are disulfide-bonded: C37/C72, C39/C65, and C55/C73. Residues 45 to 47 (RGD) carry the Cell attachment site motif.

The protein belongs to the sea anemone type 3 (BDS) potassium channel toxin family. As to expression, moderately expressed in the ectodermal tissue from the distal and proximal tentacles, body wall, and oral disk.

It localises to the secreted. The protein resides in the nematocyst. In terms of biological role, is member of a fraction that shows antiangiogenic activity, since it inhibits human microvascular endothelial cells (HMEC) tubulogenesis. This protein could be a kunitz-type inhibitor with a RGD motif that could block angiogenesis in binding on integrins. Blocks Kv3 voltage-gated potassium channels. Reduces blood pressure. The sequence is that of Kappa-actitoxin-Avd4e from Anemonia viridis (Snakelocks anemone).